A 100-amino-acid polypeptide reads, in one-letter code: C-X-C motif chemokine 2 (100 aa).

A signal peptide spans 1-31 (MAPPTRQLLNAVLVLLLLLATNHQGTGVVVA). 2 cysteine pairs are disulfide-bonded: C36-C62 and C38-C78.

The protein belongs to the intercrine alpha (chemokine CxC) family. In terms of assembly, homotetramer. As to expression, at least expressed in the lung and trachea.

It localises to the secreted. Functionally, chemotactic for human polymorphonuclear leukocytes but does not induce chemokinesis or an oxidative burst. Contributes to neutrophil activation during inflammation. This chain is C-X-C motif chemokine 2 (Cxcl2), found in Rattus norvegicus (Rat).